The primary structure comprises 294 residues: 2-oxoglutaramate amidase (294 aa).

The CN hydrolase domain maps to 16 to 261; sequence LDVAAVQVKF…EAVLRATLNF (246 aa). The active-site Proton acceptor is Glu-55. The Proton donor role is filled by Lys-129. Cys-168 functions as the Nucleophile in the catalytic mechanism.

Belongs to the carbon-nitrogen hydrolase superfamily. NIT1/NIT2 family.

It catalyses the reaction 2-oxoglutaramate + H2O = 2-oxoglutarate + NH4(+). It participates in alkaloid degradation; nicotine degradation. Functionally, catalyzes the conversion of 2-oxoglutaramate to 2-oxoglutarate. Together with glutamate dehydrogenase, may form a physiologically relevant enzyme couple, leading to transformation of metabolically inert 2-oxoglutaramate derived from trihydroxypyridine into glutamate, a central compound of nitrogen metabolism. The sequence is that of 2-oxoglutaramate amidase from Paenarthrobacter nicotinovorans (Arthrobacter nicotinovorans).